Consider the following 141-residue polypeptide: Large ribosomal subunit protein uL11 (141 aa).

Belongs to the universal ribosomal protein uL11 family. In terms of assembly, part of the ribosomal stalk of the 50S ribosomal subunit. Interacts with L10 and the large rRNA to form the base of the stalk. L10 forms an elongated spine to which L12 dimers bind in a sequential fashion forming a multimeric L10(L12)X complex. One or more lysine residues are methylated.

Forms part of the ribosomal stalk which helps the ribosome interact with GTP-bound translation factors. This chain is Large ribosomal subunit protein uL11, found in Thermotoga petrophila (strain ATCC BAA-488 / DSM 13995 / JCM 10881 / RKU-1).